The chain runs to 585 residues: MVCREQLSKNQVKWVFAGITCVSVVVIAAIVLAITLRRPGCELEACSPDADMLDYLLSLGQISRRDALEVTWYHAANSKKAMTAALNSNITVLEADVNVEGLGTANETGVPIMAHPPTIYSDNTLEQWLDAVLGSSQKGIKLDFKNIKAVGPSLDLLRQLTEEGKVRRPIWINADILKGPNMLISTEVNATQFLALVQEKYPKATLSPGWTTFYMSTSPNRTYTQAMVEKMHELVGGVPQRVTFPVRSSMVRAAWPHFSWLLSQSERYSLTLWQAASDPMSVEDLLYVRDNTAVHQVYYDIFEPLLSQFKQLALNATRKPMYYTGGSLIPLLQLPGDDGLNVEWLVPDVQGSGKTATMTLPDTEGMILLNTGLEGTVAENPVPIVHTPSGNILTLESCLQQLATHPGHWGIHLQIAEPAALRPSLALLARLSSLGLLHWPVWVGAKISHGSFSVPGHVAGRELLTAVAEVFPHVTVAPGWPEEVLGSGYREQLLTDMLELCQGLWQPVSFQMQAMLLGHSTAGAIGRLLASSPRATVTVEHNPAGGDYASVRTALLAARAVDRTRVYYRLPQGYHKDLLAHVGRN.

A helical transmembrane segment spans residues 14–34; that stretch reads WVFAGITCVSVVVIAAIVLAI.

This sequence belongs to the menorin family.

Its subcellular location is the membrane. The chain is Protein FAM151A (FAM151A) from Homo sapiens (Human).